Consider the following 208-residue polypeptide: Small ribosomal subunit protein uS4 (208 aa).

Residues R98–N158 form the S4 RNA-binding domain.

Belongs to the universal ribosomal protein uS4 family. In terms of assembly, part of the 30S ribosomal subunit. Contacts protein S5. The interaction surface between S4 and S5 is involved in control of translational fidelity.

Its function is as follows. One of the primary rRNA binding proteins, it binds directly to 16S rRNA where it nucleates assembly of the body of the 30S subunit. In terms of biological role, with S5 and S12 plays an important role in translational accuracy. The polypeptide is Small ribosomal subunit protein uS4 (Geotalea daltonii (strain DSM 22248 / JCM 15807 / FRC-32) (Geobacter daltonii)).